Reading from the N-terminus, the 181-residue chain is MKYPEMTLATLAILKYPNALLRKKSIPVEIFDDNLHNFLDDMYETLIESKGVGLAAIQVGRAERILIINIPREEDKQQYKEDLLEIINPTFLTQEECVEWEEGCLSVPDFYESIKRFDKVSIAYKDRYGNDRILKAQGFLAVAIQHEIDHLNGVLFVDKLPILKRKKFEKELKKLKKESQA.

Residues cysteine 104 and histidine 146 each contribute to the Fe cation site. Residue glutamate 147 is part of the active site. Histidine 150 lines the Fe cation pocket.

This sequence belongs to the polypeptide deformylase family. The cofactor is Fe(2+).

The enzyme catalyses N-terminal N-formyl-L-methionyl-[peptide] + H2O = N-terminal L-methionyl-[peptide] + formate. In terms of biological role, removes the formyl group from the N-terminal Met of newly synthesized proteins. Requires at least a dipeptide for an efficient rate of reaction. N-terminal L-methionine is a prerequisite for activity but the enzyme has broad specificity at other positions. The polypeptide is Peptide deformylase (Helicobacter hepaticus (strain ATCC 51449 / 3B1)).